Here is a 208-residue protein sequence, read N- to C-terminus: MAKNYYDITLALAGICQSARLVQQLAHDGQCDNVALRTSLSSILQTDPPNTLAVFGDHERVLKPGLETLLNVLNANRQGPGAELTRYCLSLMLLERKLFGHPQALRTLSERIGELDRQLAHFDLESDTIVSALAAIYVDVISPLGPRIQVTGSPAVLQNALVQARVRAALLAGIRAGILWQQVGGSRLQLMFSRNRLFQMAQNLLTHS.

Belongs to the HflD family.

The protein resides in the cytoplasm. It localises to the cell inner membrane. In Edwardsiella ictaluri (strain 93-146), this protein is High frequency lysogenization protein HflD homolog.